The chain runs to 299 residues: MNSSNPLVITLLGPTASGKTALALDIAERLDLPVFNVDSRQLYREMDIGTAKPTAEQQARIPHHLLDLRTPDQPITLQEFQAIATPCINAALEQRDVALLVGGSGLYLKALTSGLQPPAVAPQPQLRQQLTALGQQICHPLLQAADPKAAAKIAPADAVRTQRALEVLYGSGQPMSRQATAAPPPWRVLELGLNPANLRQRIQQRTEQLYRDGLVDETQRLSERYGADLPLLQTIGYSEALQMIGGSLTTTEAVRITSQRTRQFAKRQRTWFRRQHNPHWLPDQATLTDAMTLIEQHLR.

An ATP-binding site is contributed by 13–20 (GPTASGKT). Position 15–20 (15–20 (TASGKT)) interacts with substrate. An interaction with substrate tRNA region spans residues 38–41 (DSRQ).

The protein belongs to the IPP transferase family. Monomer. Mg(2+) serves as cofactor.

The catalysed reaction is adenosine(37) in tRNA + dimethylallyl diphosphate = N(6)-dimethylallyladenosine(37) in tRNA + diphosphate. In terms of biological role, catalyzes the transfer of a dimethylallyl group onto the adenine at position 37 in tRNAs that read codons beginning with uridine, leading to the formation of N6-(dimethylallyl)adenosine (i(6)A). This Synechococcus sp. (strain CC9605) protein is tRNA dimethylallyltransferase.